Here is a 950-residue protein sequence, read N- to C-terminus: Inactive atromentin synthetase invA4 (950 aa).

An adenylation (A) domain region spans residues 37 to 460; sequence SRAVSQYPNH…SGRIKDTVVV (424 aa). In terms of domain architecture, Carrier spans 592–670; the sequence is APSTETEKTL…TLAKYVDSLV (79 aa). The interval 597-667 is thiolation and peptide carrier (T) domain; the sequence is TEKTLAGIYA…EIITLAKYVD (71 aa). S629 is subject to O-(pantetheine 4'-phosphoryl)serine. Positions 693-797 are thioesterase (TE) domain; that stretch reads PIFMVHPGIG…GIIDMIPHHM (105 aa).

The protein belongs to the ATP-dependent AMP-binding enzyme family.

In terms of biological role, inactive atromentin synthetase homolog. Does not accept 4-hydroxyphenylpyruvate (4-HPP) as substrate. The protein is Inactive atromentin synthetase invA4 (invA4) of Paxillus involutus (Naked brimcap).